The primary structure comprises 480 residues: NADH-quinone oxidoreductase subunit N (480 aa).

The next 13 membrane-spanning stretches (helical) occupy residues Phe10–Glu30, Trp40–Ile60, Phe80–Phe100, Ala117–Ile137, Leu166–Ile186, Val208–Val228, Thr246–Phe266, Trp276–Leu296, Phe304–Asn324, Ala330–Ala350, Leu374–Phe394, Tyr409–Ile431, and Ile452–Leu472.

It belongs to the complex I subunit 2 family. In terms of assembly, NDH-1 is composed of 14 different subunits. Subunits NuoA, H, J, K, L, M, N constitute the membrane sector of the complex.

The protein localises to the cell inner membrane. It carries out the reaction a quinone + NADH + 5 H(+)(in) = a quinol + NAD(+) + 4 H(+)(out). Its function is as follows. NDH-1 shuttles electrons from NADH, via FMN and iron-sulfur (Fe-S) centers, to quinones in the respiratory chain. The immediate electron acceptor for the enzyme in this species is believed to be ubiquinone. Couples the redox reaction to proton translocation (for every two electrons transferred, four hydrogen ions are translocated across the cytoplasmic membrane), and thus conserves the redox energy in a proton gradient. In Protochlamydia amoebophila (strain UWE25), this protein is NADH-quinone oxidoreductase subunit N.